The chain runs to 1384 residues: Sterol 3-beta-glucosyltransferase (1384 aa).

Disordered stretches follow at residues 1–64 (MPNM…DGQL), 86–189 (ARFD…TPRA), and 204–229 (DKKQ…QSCA). Positions 7–19 (LLEDAKRRVDRRL) are enriched in basic and acidic residues. A compositionally biased stretch (low complexity) spans 21–36 (ASRQSISSSRIFSSAF). The segment covering 38-47 (DRLKDDHDAQ) has biased composition (basic and acidic residues). The span at 146-156 (LRSLKPSPKSS) shows a compositional bias: low complexity. Positions 158–172 (GTETTVQTEPPTSDE) are enriched in polar residues. Residues 174–189 (SPLASPRRARSATPRA) show a composition bias toward low complexity. Residues 209–229 (ADQPSSSTKGETDGTSEQSCA) show a composition bias toward polar residues. One can recognise a GRAM 1 domain in the interval 237–284 (KEMFGFEMPEKVLMEYACSLLQNILLQGYMYVTEGHICFYAYLPRKSA). In terms of domain architecture, PH spans 285 to 384 (VTIRSGYLHK…WVKALQKVIF (100 aa)). Disordered regions lie at residues 457 to 526 (MKTS…RQRD) and 560 to 629 (NRSD…VNSS). 3 stretches are compositionally biased toward polar residues: residues 458–473 (KTSQ…TSPA), 483–494 (WSLNSDLSQSRG), and 560–572 (NRSD…TIHT). The segment covering 578-588 (PSGDRTGRRLS) has biased composition (basic and acidic residues). A compositionally biased stretch (polar residues) spans 604-629 (RNGQEMQYASSDSDQGTQHPSKVNSS). Residues 714-817 (RFRAHFALPS…RDDCAVTVHQ (104 aa)) enclose the GRAM 2 domain. Residues Ser-901, Arg-902, Asp-904, Ala-1204, His-1206, His-1219, Gly-1223, Thr-1224, Asp-1243, and Gln-1244 each contribute to the UDP-alpha-D-glucose site. Polar residues predominate over residues 1322–1336 (VSSTPFSPTPSAKTT). Positions 1322–1350 (VSSTPFSPTPSAKTTAEQEEDDVDDSEEW) are disordered. Over residues 1338-1350 (EQEEDDVDDSEEW) the composition is skewed to acidic residues.

This sequence belongs to the glycosyltransferase 28 family.

Its subcellular location is the cytoplasm. It is found in the preautophagosomal structure membrane. The enzyme catalyses a sterol + UDP-alpha-D-glucose = a sterol 3-beta-D-glucoside + UDP + H(+). The catalysed reaction is ergosterol + UDP-alpha-D-glucose = ergosteryl 3-beta-D-glucoside + UDP + H(+). Sterol glycosyltransferase responsible for the glycosylation of ergosterol to form ergosterol-glucoside. Involved in cytoplasm to vacuole transport (Cvt), pexophagy or nonselective autophagy. The protein is Sterol 3-beta-glucosyltransferase of Aspergillus oryzae (strain ATCC 42149 / RIB 40) (Yellow koji mold).